A 275-amino-acid chain; its full sequence is MSNAELETAIEAAWEARDSISPATKGAERDAIEATLAALDGGGLRVAERQADGNWHVNQWAKKAVLLGFRIKDMEMQSGGAQGGGWWDKVDSKFAGWGEADWKDAGFRAVPNCVVRKSAYIAPGVVLMPSFVNLGAYVDEGTMVDTWATVGSCAQIGKNVHLSGGVGIGGVLEPMQAGPTIIEDNCFIGARSEVVEGCIVREGSVLGMGVFIGKSTKIVDRETGEFTYGEVPAGSVVVAGSMPSKNGVNLYCAVIVKKVDAQTRSKTSINELLRD.

Substrate contacts are provided by arginine 108 and aspartate 145.

This sequence belongs to the transferase hexapeptide repeat family. In terms of assembly, homotrimer.

It is found in the cytoplasm. It catalyses the reaction (S)-2,3,4,5-tetrahydrodipicolinate + succinyl-CoA + H2O = (S)-2-succinylamino-6-oxoheptanedioate + CoA. It functions in the pathway amino-acid biosynthesis; L-lysine biosynthesis via DAP pathway; LL-2,6-diaminopimelate from (S)-tetrahydrodipicolinate (succinylase route): step 1/3. The chain is 2,3,4,5-tetrahydropyridine-2,6-dicarboxylate N-succinyltransferase from Roseobacter denitrificans (strain ATCC 33942 / OCh 114) (Erythrobacter sp. (strain OCh 114)).